The sequence spans 476 residues: Glycogen synthase (476 aa).

Residue K15 coordinates ADP-alpha-D-glucose.

This sequence belongs to the glycosyltransferase 1 family. Bacterial/plant glycogen synthase subfamily.

It carries out the reaction [(1-&gt;4)-alpha-D-glucosyl](n) + ADP-alpha-D-glucose = [(1-&gt;4)-alpha-D-glucosyl](n+1) + ADP + H(+). Its pathway is glycan biosynthesis; glycogen biosynthesis. In terms of biological role, synthesizes alpha-1,4-glucan chains using ADP-glucose. The protein is Glycogen synthase of Streptococcus agalactiae serotype Ia (strain ATCC 27591 / A909 / CDC SS700).